A 404-amino-acid polypeptide reads, in one-letter code: Cysteine desulfurase IscS (404 aa).

Pyridoxal 5'-phosphate-binding positions include 75–76, N155, Q183, and 203–205; these read AT and SGH. K206 carries the N6-(pyridoxal phosphate)lysine modification. A pyridoxal 5'-phosphate-binding site is contributed by T243. Residue C328 is the Cysteine persulfide intermediate of the active site. A [2Fe-2S] cluster-binding site is contributed by C328.

Belongs to the class-V pyridoxal-phosphate-dependent aminotransferase family. NifS/IscS subfamily. Homodimer. Forms a heterotetramer with IscU, interacts with other sulfur acceptors. It depends on pyridoxal 5'-phosphate as a cofactor.

The protein resides in the cytoplasm. It carries out the reaction (sulfur carrier)-H + L-cysteine = (sulfur carrier)-SH + L-alanine. It participates in cofactor biosynthesis; iron-sulfur cluster biosynthesis. Master enzyme that delivers sulfur to a number of partners involved in Fe-S cluster assembly, tRNA modification or cofactor biosynthesis. Catalyzes the removal of elemental sulfur and selenium atoms from cysteine and selenocysteine to produce alanine. Functions as a sulfur delivery protein for Fe-S cluster synthesis onto IscU, an Fe-S scaffold assembly protein, as well as other S acceptor proteins. Also functions as a selenium delivery protein in the pathway for the biosynthesis of selenophosphate. This chain is Cysteine desulfurase IscS, found in Escherichia coli (strain K12 / DH10B).